The chain runs to 467 residues: ATP synthase subunit beta (467 aa).

ATP is bound at residue 152–159 (GGAGVGKT).

The protein belongs to the ATPase alpha/beta chains family. In terms of assembly, F-type ATPases have 2 components, CF(1) - the catalytic core - and CF(0) - the membrane proton channel. CF(1) has five subunits: alpha(3), beta(3), gamma(1), delta(1), epsilon(1). CF(0) has three main subunits: a(1), b(2) and c(9-12). The alpha and beta chains form an alternating ring which encloses part of the gamma chain. CF(1) is attached to CF(0) by a central stalk formed by the gamma and epsilon chains, while a peripheral stalk is formed by the delta and b chains.

The protein localises to the cell inner membrane. It catalyses the reaction ATP + H2O + 4 H(+)(in) = ADP + phosphate + 5 H(+)(out). Its function is as follows. Produces ATP from ADP in the presence of a proton gradient across the membrane. The catalytic sites are hosted primarily by the beta subunits. This Wolinella succinogenes (strain ATCC 29543 / DSM 1740 / CCUG 13145 / JCM 31913 / LMG 7466 / NCTC 11488 / FDC 602W) (Vibrio succinogenes) protein is ATP synthase subunit beta.